A 481-amino-acid chain; its full sequence is Proline--tRNA ligase (481 aa).

The protein belongs to the class-II aminoacyl-tRNA synthetase family. ProS type 3 subfamily. Homodimer.

Its subcellular location is the cytoplasm. The enzyme catalyses tRNA(Pro) + L-proline + ATP = L-prolyl-tRNA(Pro) + AMP + diphosphate. Functionally, catalyzes the attachment of proline to tRNA(Pro) in a two-step reaction: proline is first activated by ATP to form Pro-AMP and then transferred to the acceptor end of tRNA(Pro). This chain is Proline--tRNA ligase, found in Chloroherpeton thalassium (strain ATCC 35110 / GB-78).